The following is a 276-amino-acid chain: Small ribosomal subunit protein uS3 (276 aa).

In terms of domain architecture, KH type-2 spans 43–111; it reads IRQLMSTGME…QVQLNILEVK (69 aa). The segment covering 218–227 has biased composition (low complexity); the sequence is AQAASAPSRG. Residues 218-276 are disordered; sequence AQAASAPSRGPRSDRGGRPGGADRGDRRRRNDRPAADAAPAAEAPAVEAAPAAAEGGQA. Residues 228–243 are compositionally biased toward basic and acidic residues; that stretch reads PRSDRGGRPGGADRGD. Low complexity predominate over residues 253-276; sequence ADAAPAAEAPAVEAAPAAAEGGQA.

The protein belongs to the universal ribosomal protein uS3 family. In terms of assembly, part of the 30S ribosomal subunit. Forms a tight complex with proteins S10 and S14.

In terms of biological role, binds the lower part of the 30S subunit head. Binds mRNA in the 70S ribosome, positioning it for translation. The chain is Small ribosomal subunit protein uS3 from Pseudarthrobacter chlorophenolicus (strain ATCC 700700 / DSM 12829 / CIP 107037 / JCM 12360 / KCTC 9906 / NCIMB 13794 / A6) (Arthrobacter chlorophenolicus).